A 76-amino-acid chain; its full sequence is Large ribosomal subunit protein uL29 (76 aa).

Belongs to the universal ribosomal protein uL29 family.

This Gloeothece citriformis (strain PCC 7424) (Cyanothece sp. (strain PCC 7424)) protein is Large ribosomal subunit protein uL29.